The primary structure comprises 267 residues: HTH-type transcriptional activator CsvR (267 aa).

DNA-binding regions (H-T-H motif) lie at residues 183 to 204 (AIIADVFNVSEITIRKRLESED) and 230 to 253 (ISQISNMIGISSASYFIRIFNKHF).

In terms of assembly, homodimer.

In terms of biological role, transcriptional activator of fimbrial genes in enterotoxigenic E.coli. This Escherichia coli protein is HTH-type transcriptional activator CsvR.